Reading from the N-terminus, the 479-residue chain is Long-chain acyl-protein thioester reductase (479 aa).

This sequence belongs to the LuxC family.

The catalysed reaction is a long-chain fatty aldehyde + NADP(+) + CoA = a long-chain fatty acyl-CoA + NADPH + H(+). It functions in the pathway lipid metabolism; fatty acid reduction for biolumincescence. Functionally, luxC is the fatty acid reductase enzyme responsible for synthesis of the aldehyde substrate for the luminescent reaction catalyzed by luciferase. This chain is Long-chain acyl-protein thioester reductase (luxC), found in Aliivibrio fischeri (Vibrio fischeri).